Consider the following 549-residue polypeptide: E-selectin (549 aa).

A signal peptide spans 1–21; that stretch reads MNASCFLSALTFVLLIGKSIA. Positions 22 to 139 constitute a C-type lectin domain; the sequence is WYYNASSELM…CDKKKLALCY (118 aa). Residues 22–494 are Extracellular-facing; the sequence is WYYNASSELM…CEAPANPPRP (473 aa). Residues asparagine 25 and asparagine 60 are each glycosylated (N-linked (GlcNAc...) asparagine). 17 disulfide bridges follow: cysteine 40/cysteine 138, cysteine 111/cysteine 130, cysteine 143/cysteine 154, cysteine 148/cysteine 163, cysteine 165/cysteine 174, cysteine 180/cysteine 225, cysteine 193/cysteine 206, cysteine 210/cysteine 238, cysteine 243/cysteine 287, cysteine 256/cysteine 269, cysteine 273/cysteine 300, cysteine 305/cysteine 350, cysteine 336/cysteine 363, cysteine 368/cysteine 413, cysteine 399/cysteine 426, cysteine 431/cysteine 472, and cysteine 458/cysteine 485. Glutamate 101, asparagine 103, and glutamate 109 together coordinate Ca(2+). A carbohydrate-binding positions include 101–109, 113–118, and 126–128; these read EPNNKQRNE, EIYIQR, and NDE. 2 residues coordinate Ca(2+): asparagine 126 and aspartate 127. Residues 140–175 enclose the EGF-like domain; that stretch reads TASCTNTSCSGHGECVETINSYTCKCHPGFLGPKCD. A glycan (N-linked (GlcNAc...) asparagine) is linked at asparagine 145. 5 Sushi domains span residues 178 to 240, 241 to 302, 303 to 365, 366 to 428, and 429 to 487; these read VTCQ…ACHV, VECK…SCKA, VTCD…VCKA, SQCE…TCAG, and VQCS…TCEA. 2 N-linked (GlcNAc...) asparagine glycosylation sites follow: asparagine 192 and asparagine 203. Asparagine 266 carries N-linked (GlcNAc...) asparagine glycosylation. Residues asparagine 313, asparagine 320, and asparagine 333 are each glycosylated (N-linked (GlcNAc...) asparagine). N-linked (GlcNAc...) asparagine glycosylation is found at asparagine 441 and asparagine 465. A helical membrane pass occupies residues 495-516; that stretch reads LVVALSVAATSLLTLSSLIYVL. At 517 to 549 the chain is on the cytoplasmic side; it reads KRFFWKKAKKFVPASSCQSLQSFENYQGPSYII.

This sequence belongs to the selectin/LECAM family. As to quaternary structure, interacts with SELPLG/PSGL1 and PODXL2 through the sialyl Lewis X epitope. SELPLG sulfation appears not to be required for this interaction.

Its subcellular location is the cell membrane. Functionally, cell-surface glycoprotein having a role in immunoadhesion. Mediates in the adhesion of blood neutrophils in cytokine-activated endothelium through interaction with SELPLG/PSGL1. May have a role in capillary morphogenesis. This Rattus norvegicus (Rat) protein is E-selectin (Sele).